We begin with the raw amino-acid sequence, 180 residues long: MEQPTSSTNGEKRKSPCESNNKKNDEMQEAPNRVLAPKQSLQKTKTIEYLTIIVYYYRKHTKINSNQLEKDQSRENSINPVQEEEDEGLDSAEGSSQEDEDLDSSEGSSQEDEDLDSSEGSSQEDEDLDSSEGSSQEDEDLDSSEGSSQEDEDLDPPEGSSQEDEDLDSSEGSSQEGGED.

2 disordered regions span residues 1–46 (MEQP…KTKT) and 64–180 (NSNQ…GGED). Over residues 10–26 (GEKRKSPCESNNKKNDE) the composition is skewed to basic and acidic residues. Acidic residues predominate over residues 82–169 (QEEEDEGLDS…SSQEDEDLDS (88 aa)). Residues 170-180 (SEGSSQEGGED) show a composition bias toward low complexity.

This sequence belongs to the SPAN-X family.

The polypeptide is Sperm protein associated with the nucleus on the X chromosome N2 (SPANXN2) (Homo sapiens (Human)).